The following is a 364-amino-acid chain: Poly(3-hydroxyalkanoate) polymerase subunit PhaE (364 aa).

Residues 322-364 (SGKTPTTALKAPAPATKATEKPATRATTRRKTAAKPTGGTADD) form a disordered region. Positions 324-338 (KTPTTALKAPAPATK) are enriched in low complexity.

The protein belongs to the PHA/PHB synthase family. Type III PhaE subfamily. Forms a heterodimer with PhaC, which may multimerize in the presence of 3-hydroxybutyryl-CoA.

The protein resides in the cytoplasm. Its pathway is biopolymer metabolism; poly-(R)-3-hydroxybutanoate biosynthesis. Functionally, polymerizes D(-)-3-hydroxybutyryl-CoA to create polyhydroxybutyrate (PHB) which consists of thousands of hydroxybutyrate molecules linked end to end. This subunit has no catalytic activity but enhances the activity of PhaC, the catalytic subunit. In Thiocystis violacea, this protein is Poly(3-hydroxyalkanoate) polymerase subunit PhaE.